The sequence spans 337 residues: NADH-quinone oxidoreductase subunit H (337 aa).

8 consecutive transmembrane segments (helical) span residues 13-33 (IIIV…IAYL), 82-102 (AVFI…WAVI), 115-135 (VGVL…IMAG), 154-174 (MVSY…SAGS), 187-207 (GVWY…SILA), 248-268 (ILMS…PVDI), 274-294 (IPGI…FLWV), and 313-333 (VFLP…VTFD).

The protein belongs to the complex I subunit 1 family. In terms of assembly, NDH-1 is composed of 14 different subunits. Subunits NuoA, H, J, K, L, M, N constitute the membrane sector of the complex.

It is found in the cell inner membrane. It catalyses the reaction a quinone + NADH + 5 H(+)(in) = a quinol + NAD(+) + 4 H(+)(out). In terms of biological role, NDH-1 shuttles electrons from NADH, via FMN and iron-sulfur (Fe-S) centers, to quinones in the respiratory chain. The immediate electron acceptor for the enzyme in this species is believed to be ubiquinone. Couples the redox reaction to proton translocation (for every two electrons transferred, four hydrogen ions are translocated across the cytoplasmic membrane), and thus conserves the redox energy in a proton gradient. This subunit may bind ubiquinone. This Rhodospirillum rubrum (strain ATCC 11170 / ATH 1.1.1 / DSM 467 / LMG 4362 / NCIMB 8255 / S1) protein is NADH-quinone oxidoreductase subunit H.